Here is a 941-residue protein sequence, read N- to C-terminus: Pre-mRNA-processing factor 6 (941 aa).

The segment at 1–79 (MNKKKKPFLG…DEDLNDTNYD (79 aa)) is disordered. Residues 39 to 65 (DANDPVDDRHAPPGKRTVGDQMKKNQA) show a composition bias toward basic and acidic residues. Positions 66 to 78 (ADDDDEDLNDTNY) are enriched in acidic residues. Phosphoserine is present on Ser143. Phosphothreonine is present on residues Thr180, Thr266, and Thr275. The residue at position 279 (Ser279) is a Phosphoserine. HAT repeat units lie at residues 384-416 (TDIRAKKRVLRKALEHVPNSVRLWKAAVELEEP), 418-444 (DARIMLSRAVECCPTSVELWLALARLE), 445-476 (TYENARKVLNKARENIPTDRHIWITAAKLEEA), 554-586 (NALECARAIYAYALQVFPSKKSVWLRAAYFEKN), 588-620 (GTRESLEALLQRAVAHCPKAEVLWLMGAKSKWL), 622-654 (GDVPAARSILALAFQANPNSEEIWLAAVKLESE), 689-721 (GNISAAQELCEEALRHYEDFPKLWMMKGQIEEQ), 723-755 (ELMEKAREAYNQGLKKCPHSTPLWLLLSRLEEK), and 855-887 (RKITKAREWFHRTVKIDSDLGDAWAFFYKFELQ).

Identified in the spliceosome B complex. Identified in the spliceosome C complex. Associates with the U5 snRNP particle. Component of the U4/U6-U5 tri-snRNP complex composed of the U4, U6 and U5 snRNAs and at least PRPF3, PRPF4, PRPF6, PRPF8, PRPF31, SNRNP200, TXNL4A, SNRNP40, DDX23, CD2BP2, PPIH, SNU13, EFTUD2, SART1 and USP39, LSm proteins LSm2-8 and Sm proteins. Interacts with ARAF1. Interacts with AR and NR3C1, but not ESR1, independently of the presence of hormones. Interacts with USH1G. Post-translationally, phosphorylated by PRP4K during spliceosome assembly.

Its subcellular location is the nucleus. It localises to the nucleoplasm. The protein localises to the nucleus speckle. In terms of biological role, involved in pre-mRNA splicing as component of the U4/U6-U5 tri-snRNP complex, one of the building blocks of the spliceosome. Enhances dihydrotestosterone-induced transactivation activity of AR, as well as dexamethasone-induced transactivation activity of NR3C1, but does not affect estrogen-induced transactivation. In Mus musculus (Mouse), this protein is Pre-mRNA-processing factor 6 (Prpf6).